The chain runs to 29 residues: MEILTLGWVSLLVVFTWSIAMVVWGRNGL.

A helical transmembrane segment spans residues 3 to 23 (ILTLGWVSLLVVFTWSIAMVV).

This sequence belongs to the PetN family. The 4 large subunits of the cytochrome b6-f complex are cytochrome b6, subunit IV (17 kDa polypeptide, PetD), cytochrome f and the Rieske protein, while the 4 small subunits are PetG, PetL, PetM and PetN. The complex functions as a dimer.

It is found in the cellular thylakoid membrane. Functionally, component of the cytochrome b6-f complex, which mediates electron transfer between photosystem II (PSII) and photosystem I (PSI), cyclic electron flow around PSI, and state transitions. The sequence is that of Cytochrome b6-f complex subunit 8 from Nostoc punctiforme (strain ATCC 29133 / PCC 73102).